Here is a 457-residue protein sequence, read N- to C-terminus: Putative methyltransferase MT1451 (457 aa).

S-adenosyl-L-methionine contacts are provided by residues 276-282 (CAGPGGK), Glu-301, Asp-325, and Asp-341. Cys-394 serves as the catalytic Nucleophile.

It belongs to the class I-like SAM-binding methyltransferase superfamily. RsmB/NOP family.

Functionally, may act as RNA methyltransferase. The protein is Putative methyltransferase MT1451 of Mycobacterium tuberculosis (strain CDC 1551 / Oshkosh).